The following is a 313-amino-acid chain: Extracellular metalloprotease (313 aa).

The signal sequence occupies residues 1 to 34; the sequence is MKLVPRFRKQWFAYLTVLCLALAAAVSFGVPAKA. A disordered region spans residues 35-74; the sequence is AENPQTSVSNTGKEADATKNQTSKADQVSAPYEGTGKTSK. Residues 35-93 constitute a propeptide that is removed on maturation; it reads AENPQTSVSNTGKEADATKNQTSKADQVSAPYEGTGKTSKSLYGGQTELEKNIQTLQPS. Residues 37–60 show a composition bias toward polar residues; sequence NPQTSVSNTGKEADATKNQTSKAD. Cysteine 131 and cysteine 147 form a disulfide bridge. Active-site charge relay system residues include histidine 146 and serine 267.

The protein belongs to the peptidase S1B family. Monomer.

Its subcellular location is the secreted. This is Extracellular metalloprotease (mpr) from Bacillus subtilis (strain 168).